The sequence spans 212 residues: Transcriptional regulator GfcR (212 aa).

Belongs to the purine/pyrimidine phosphoribosyltransferase family. GfcR subfamily.

In terms of biological role, DNA-binding transcriptional regulator that functions as a regulator of central sugar catabolic pathways. The sequence is that of Transcriptional regulator GfcR from Halobacterium salinarum (strain ATCC 29341 / DSM 671 / R1).